We begin with the raw amino-acid sequence, 711 residues long: DNA topoisomerase 3 (711 aa).

Residues 2–135 enclose the Toprim domain; it reads KSLILAEKPS…IKRLWISSVT (134 aa). Mg(2+) contacts are provided by Glu-8 and Asp-104. Residues 152–580 enclose the Topo IA-type catalytic domain; that stretch reads YQNLYEAALA…EMKNFTFKVV (429 aa). Positions 186-191 are interaction with DNA; the sequence is SLGRVQ. Tyr-305 acts as the O-(5'-phospho-DNA)-tyrosine intermediate in catalysis.

It belongs to the type IA topoisomerase family. Requires Mg(2+) as cofactor.

It catalyses the reaction ATP-independent breakage of single-stranded DNA, followed by passage and rejoining.. Its function is as follows. Releases the supercoiling and torsional tension of DNA, which is introduced during the DNA replication and transcription, by transiently cleaving and rejoining one strand of the DNA duplex. Introduces a single-strand break via transesterification at a target site in duplex DNA. The scissile phosphodiester is attacked by the catalytic tyrosine of the enzyme, resulting in the formation of a DNA-(5'-phosphotyrosyl)-enzyme intermediate and the expulsion of a 3'-OH DNA strand. The free DNA strand then undergoes passage around the unbroken strand, thus removing DNA supercoils. Finally, in the religation step, the DNA 3'-OH attacks the covalent intermediate to expel the active-site tyrosine and restore the DNA phosphodiester backbone. The sequence is that of DNA topoisomerase 3 from Staphylococcus epidermidis (strain ATCC 12228 / FDA PCI 1200).